The chain runs to 252 residues: 5'-nucleotidase SurE (252 aa).

A divalent metal cation-binding residues include aspartate 8, aspartate 9, serine 39, and asparagine 91.

It belongs to the SurE nucleotidase family. A divalent metal cation is required as a cofactor.

The protein localises to the cytoplasm. It carries out the reaction a ribonucleoside 5'-phosphate + H2O = a ribonucleoside + phosphate. Functionally, nucleotidase that shows phosphatase activity on nucleoside 5'-monophosphates. This is 5'-nucleotidase SurE from Legionella pneumophila (strain Corby).